Consider the following 152-residue polypeptide: MTTQTQHDLAPANQPEFELTVTPVPDEQRIDFWPQYFGAIPQWLLLEPHIFAWMDRFCEGYSGGIWSFYTLSNGGAFMSPEPDNDETWRLFNCLNGNDAQMSAEAAGIAVCLIAYSHHACRTECDAMTAHYYRLREYAMQHPEAHAILRIID.

The protein belongs to the antirestriction protein family.

This is an uncharacterized protein from Escherichia coli (strain K12).